The primary structure comprises 426 residues: Histidine--tRNA ligase (426 aa).

The protein belongs to the class-II aminoacyl-tRNA synthetase family. Homodimer.

Its subcellular location is the cytoplasm. It carries out the reaction tRNA(His) + L-histidine + ATP = L-histidyl-tRNA(His) + AMP + diphosphate + H(+). This is Histidine--tRNA ligase from Prochlorococcus marinus (strain MIT 9312).